Consider the following 242-residue polypeptide: MIEYKNVALRYTEKDVLRDVNLQIEDGEFMVLVGPSGSGKTTMLKMINRLLEPTDGNIYMDGKRIKDYDERELRLSTGYVLQAIALFPNLTVEENIALIPEMKGWTKEEIAQKTEELLAKVGLPVAEYGHRLPSELSGGEQQRVGIVRAMIGQPKILLMDEPFSALDAISRKQLQVLTKELHKEFGMTTIFVTHDTDEALKLADRIAVLQDGEIRQVSNPETILKAPATDFVADLFGGSIHD.

The 235-residue stretch at 2–236 folds into the ABC transporter domain; it reads IEYKNVALRY…PATDFVADLF (235 aa). Position 34 to 41 (34 to 41) interacts with ATP; sequence GPSGSGKT.

The protein belongs to the ABC transporter superfamily. The complex is probably composed of at least an ATP-binding protein (EgtUA) and a transmembrane protein (EgtUBC).

Its subcellular location is the cell inner membrane. It catalyses the reaction ergothioneine(out) + ATP + H2O = ergothioneine(in) + ADP + phosphate + H(+). In terms of biological role, part of an ABC transporter complex EgtU required for the uptake of ergothioneine (EGT), a natural low-molecular weight (LMW) thiol antioxidant. Probably responsible for energy coupling to the transport system. The polypeptide is Probable ergothioneine transport ATP-binding protein EgtUA (Streptococcus pneumoniae serotype 2 (strain D39 / NCTC 7466)).